The primary structure comprises 491 residues: Glutamate--tRNA ligase (491 aa).

Residues 9–19 (PSPTGTPHVGM) carry the 'HIGH' region motif. Positions 253-257 (KLSKR) match the 'KMSKS' region motif. Lys256 contributes to the ATP binding site.

The protein belongs to the class-I aminoacyl-tRNA synthetase family. Glutamate--tRNA ligase type 1 subfamily. As to quaternary structure, monomer.

It is found in the cytoplasm. It catalyses the reaction tRNA(Glu) + L-glutamate + ATP = L-glutamyl-tRNA(Glu) + AMP + diphosphate. Its function is as follows. Catalyzes the attachment of glutamate to tRNA(Glu) in a two-step reaction: glutamate is first activated by ATP to form Glu-AMP and then transferred to the acceptor end of tRNA(Glu). In Leifsonia xyli subsp. xyli (strain CTCB07), this protein is Glutamate--tRNA ligase.